The primary structure comprises 347 residues: UDP-galactose/UDP-glucose transporter 5 (347 aa).

Helical transmembrane passes span 17–37 (LWKAVFAISGIMLTLVIYGLL), 57–77 (LFLVFCNRLTTSAVSAAALLA), 116–136 (VQTLAKCAKMIPVMVWGTLIM), 143–163 (FDYLVAFLVTLGCSVFILFPA), 177–197 (TVWGVSLMVGYLGFDGFTSTF), 218–238 (ICSSILSFTGLILQGHLLPAV), 247–267 (CLFDIALLSTVATASQFFISY), and 293–313 (CIWFSHPLSWEQCIGSVIVFG). Positions 325 to 347 (SEKPPAAQELPRDEEAQPLKGNP) are disordered.

Belongs to the nucleotide-sugar transporter family. UDP-galactose:UMP antiporter (TC 2.A.7.11) subfamily.

Its subcellular location is the membrane. Sugar transporter involved in the transport of nucleotide-sugars from cytoplasm into the Golgi and/or the endoplasmic reticulum. The protein is UDP-galactose/UDP-glucose transporter 5 of Arabidopsis thaliana (Mouse-ear cress).